Reading from the N-terminus, the 358-residue chain is Methylthioribose-1-phosphate isomerase (358 aa).

Residues 54 to 56 (RGA), R96, and Q205 each bind substrate. Catalysis depends on D246, which acts as the Proton donor. Residue 256–257 (NK) coordinates substrate.

The protein belongs to the eIF-2B alpha/beta/delta subunits family. MtnA subfamily.

The catalysed reaction is 5-(methylsulfanyl)-alpha-D-ribose 1-phosphate = 5-(methylsulfanyl)-D-ribulose 1-phosphate. Its pathway is amino-acid biosynthesis; L-methionine biosynthesis via salvage pathway; L-methionine from S-methyl-5-thio-alpha-D-ribose 1-phosphate: step 1/6. In terms of biological role, catalyzes the interconversion of methylthioribose-1-phosphate (MTR-1-P) into methylthioribulose-1-phosphate (MTRu-1-P). In Pseudomonas paraeruginosa (strain DSM 24068 / PA7) (Pseudomonas aeruginosa (strain PA7)), this protein is Methylthioribose-1-phosphate isomerase.